A 487-amino-acid polypeptide reads, in one-letter code: Phosphatidylserine synthase 2 (487 aa).

Basic and acidic residues predominate over residues 1–10; sequence MRRGERRDAG. The disordered stretch occupies residues 1–50; it reads MRRGERRDAGGPRPESPVPAGRASLEEPPDGPSAGQATGPGEGRRSTESE. Residues 1 to 62 lie on the Cytoplasmic side of the membrane; the sequence is MRRGERRDAG…DDGTNTFFWR (62 aa). A phosphoserine mark is found at S16 and S24. A helical transmembrane segment spans residues 63 to 83; sequence AHTLTVLFILTCTLGYVTLLE. Residues 84 to 96 are Lumenal-facing; it reads ETPQDTAYNTKRG. A helical transmembrane segment spans residues 97–117; that stretch reads IVASILVFLCFGVTQAKDGPF. Topologically, residues 118 to 126 are cytoplasmic; that stretch reads SRPHPAYWR. A helical transmembrane segment spans residues 127–147; it reads FWLCVSVVYELFLIFILFQTV. Topologically, residues 148–313 are lumenal; the sequence is QDGRQFLKYV…EWKPASSLRR (166 aa). Residue N181 is glycosylated (N-linked (GlcNAc...) asparagine). Residues 314–334 form a helical membrane-spanning segment; the sequence is WLAVCGIILVFLLAELNTFYL. K335 is a topological domain (cytoplasmic). The chain crosses the membrane as a helical span at residues 336–356; the sequence is FVLWMPPEHYLVLLRLVFFVN. At 357–376 the chain is on the lumenal side; the sequence is VGGVAMREIYDFMDDPKPHK. A helical transmembrane segment spans residues 377 to 397; the sequence is KLGPQAWLVAAITATELLIVV. Residues 398–403 lie on the Cytoplasmic side of the membrane; the sequence is KYDPHT. Residues 404 to 424 traverse the membrane as a helical segment; sequence LTLSLPFYISQCWTLGSVLAL. At 425–487 the chain is on the lumenal side; the sequence is TWTVWRFFLR…AEGEGAPTPN (63 aa). Residues 451 to 487 form a disordered region; the sequence is KDDQGSTVGNGDQHPLGLDEDLLGPGVAEGEGAPTPN. T485 bears the Phosphothreonine mark.

It belongs to the phosphatidyl serine synthase family.

The protein localises to the endoplasmic reticulum membrane. The catalysed reaction is a 1,2-diacyl-sn-glycero-3-phosphoethanolamine + L-serine = a 1,2-diacyl-sn-glycero-3-phospho-L-serine + ethanolamine. The enzyme catalyses 1-hexadecanoyl-2-(9Z-octadecenoyl)-sn-glycero-3-phosphoethanolamine + L-serine = 1-hexadecanoyl-2-(9Z-octadecenoyl)-sn-glycero-3-phospho-L-serine + ethanolamine. It catalyses the reaction 1-hexadecanoyl-2-(4Z,7Z,10Z,13Z,16Z,19Z-docosahexaenoyl)-sn-glycero-3-phosphoethanolamine + L-serine = 1-hexadecanoyl-2-(4Z,7Z,10Z,13Z,16Z,19Z-docosahexaenoyl)-sn-glycero-3-phosphoserine + ethanolamine. It carries out the reaction 1-octadecanoyl-2-(5Z,8Z,11Z,14Z)-eicosatetraenoyl-sn-glycero-3-phosphoethanolamine + L-serine = 1-octadecanoyl-2-(5Z,8Z,11Z,14Z)-eicosatetraenoyl-sn-glycero-3-phosphoserine + ethanolamine. The catalysed reaction is 1-octadecanoyl-2-(4Z,7Z,10Z,13Z,16Z,19Z-docosahexaenoyl)-sn-glycero-3-phosphoethanolamine + L-serine = 1-octadecanoyl-2-(4Z,7Z,10Z,13Z,16Z,19Z-docosahexaenoyl)-sn-glycero-3-phosphoserine + ethanolamine. The enzyme catalyses 1-(1Z-octadecenyl)-2-(4Z,7Z,10Z,13Z,16Z,19Z-docosahexaenoyl)-sn-glycero-3-phosphoethanolamine + L-serine = 1-(1Z-octadecenyl)-2-(4Z,7Z,10Z,13Z,16Z,19Z-docosahexaenoyl)-sn-glycero-3-phospho-L-serine + ethanolamine. It catalyses the reaction 1-octadecanoyl-2-(9Z-octadecenoyl)-sn-glycero-3-phosphoethanolamine + L-serine = 1-octadecanoyl-2-(9Z-octadecenoyl)-sn-glycero-3-phospho-L-serine + ethanolamine. It carries out the reaction 1-(1Z-octadecenyl)-2-(9Z-octadecenoyl)-sn-glycero-3-phosphoethanolamine + L-serine = 1-(1Z-octadecenyl)-2-(9Z-octadecenoyl)-sn-glycero-3-phospho-L-serine + ethanolamine. The catalysed reaction is 1-(1Z-octadecenyl)-2-(5Z,8Z,11Z,14Z- eicosatetraenoyl)-sn-glycero-3-phosphoethanolamine + L-serine = 1-(1Z-octadecenyl)-2-(5Z,8Z,11Z,14Z-eicosatetraenoyl)-sn-glycero-3-phospho-L-serine + ethanolamine. The protein operates within phospholipid metabolism; phosphatidylserine biosynthesis. With respect to regulation, requires calcium ions. Inhibited by exogenous phosphatidylserine. Catalyzes a base-exchange reaction in which the polar head group of phosphatidylethanolamine (PE) or phosphatidylcholine (PC) is replaced by L-serine. Catalyzes the conversion of phosphatatidylethanolamine and does not act on phosphatidylcholine. Can utilize both phosphatidylethanolamine (PE) plasmalogen and diacyl PE as substrate and the latter is six times better utilized, indicating the importance of an ester linkage at the sn-1 position. Although it shows no sn-1 fatty acyl preference, exhibits significant preference towards docosahexaenoic acid (22:6n-3) compared with 18:1 or 20:4 at the sn-2 position. The sequence is that of Phosphatidylserine synthase 2 (PTDSS2) from Homo sapiens (Human).